The sequence spans 151 residues: Small ribosomal subunit protein uS19 (151 aa).

Ala2 carries the post-translational modification N-acetylalanine.

This sequence belongs to the universal ribosomal protein uS19 family.

Its function is as follows. Negatively regulates lifespan. In Caenorhabditis elegans, this protein is Small ribosomal subunit protein uS19.